Reading from the N-terminus, the 92-residue chain is Small ribosomal subunit protein uS19 (92 aa).

This sequence belongs to the universal ribosomal protein uS19 family.

In terms of biological role, protein S19 forms a complex with S13 that binds strongly to the 16S ribosomal RNA. In Azorhizobium caulinodans (strain ATCC 43989 / DSM 5975 / JCM 20966 / LMG 6465 / NBRC 14845 / NCIMB 13405 / ORS 571), this protein is Small ribosomal subunit protein uS19.